The following is a 459-amino-acid chain: Bifunctional protein GlmU (459 aa).

The interval 1-230 (MTTRNTIILA…FDESMGVNDR (230 aa)) is pyrophosphorylase. UDP-N-acetyl-alpha-D-glucosamine is bound by residues 9-12 (LAAG), K23, Q73, 78-79 (GT), 101-103 (SGD), G140, E155, N170, and N228. D103 contacts Mg(2+). Position 228 (N228) interacts with Mg(2+). Positions 231 to 251 (VALSAATKIMRDRINEAHMRD) are linker. Positions 252 to 459 (GVTLIDPATT…YQKLPYRGED (208 aa)) are N-acetyltransferase. The UDP-N-acetyl-alpha-D-glucosamine site is built by R333 and K351. H363 (proton acceptor) is an active-site residue. UDP-N-acetyl-alpha-D-glucosamine-binding residues include Y366 and N377. Acetyl-CoA contacts are provided by residues 386–387 (NY), S405, A423, and R440.

This sequence in the N-terminal section; belongs to the N-acetylglucosamine-1-phosphate uridyltransferase family. It in the C-terminal section; belongs to the transferase hexapeptide repeat family. As to quaternary structure, homotrimer. Requires Mg(2+) as cofactor.

Its subcellular location is the cytoplasm. The enzyme catalyses alpha-D-glucosamine 1-phosphate + acetyl-CoA = N-acetyl-alpha-D-glucosamine 1-phosphate + CoA + H(+). The catalysed reaction is N-acetyl-alpha-D-glucosamine 1-phosphate + UTP + H(+) = UDP-N-acetyl-alpha-D-glucosamine + diphosphate. Its pathway is nucleotide-sugar biosynthesis; UDP-N-acetyl-alpha-D-glucosamine biosynthesis; N-acetyl-alpha-D-glucosamine 1-phosphate from alpha-D-glucosamine 6-phosphate (route II): step 2/2. It participates in nucleotide-sugar biosynthesis; UDP-N-acetyl-alpha-D-glucosamine biosynthesis; UDP-N-acetyl-alpha-D-glucosamine from N-acetyl-alpha-D-glucosamine 1-phosphate: step 1/1. The protein operates within bacterial outer membrane biogenesis; LPS lipid A biosynthesis. Its function is as follows. Catalyzes the last two sequential reactions in the de novo biosynthetic pathway for UDP-N-acetylglucosamine (UDP-GlcNAc). The C-terminal domain catalyzes the transfer of acetyl group from acetyl coenzyme A to glucosamine-1-phosphate (GlcN-1-P) to produce N-acetylglucosamine-1-phosphate (GlcNAc-1-P), which is converted into UDP-GlcNAc by the transfer of uridine 5-monophosphate (from uridine 5-triphosphate), a reaction catalyzed by the N-terminal domain. This is Bifunctional protein GlmU from Levilactobacillus brevis (strain ATCC 367 / BCRC 12310 / CIP 105137 / JCM 1170 / LMG 11437 / NCIMB 947 / NCTC 947) (Lactobacillus brevis).